A 172-amino-acid polypeptide reads, in one-letter code: Spermidine/spermine N(1)-acetyltransferase (172 aa).

Residues 3-172 (VKMKKCSRED…TDLIMAKTLI (170 aa)) form the N-acetyltransferase domain. Residues 96–98 (IYI), 105–109 (HGLGK), and 135–137 (NEN) contribute to the acetyl-CoA site. The Proton donor role is filled by tyrosine 142. Acetyl-CoA is bound at residue lysine 144.

The protein belongs to the acetyltransferase family. As to quaternary structure, monomer.

It catalyses the reaction an alkane-alpha,omega-diamine + acetyl-CoA = an N-acetylalkane-alpha,omega-diamine + CoA + H(+). Its function is as follows. Involved in the protection against polyamine toxicity by regulating their concentration. Could also be involved in the negative control of sporulation as well as production of degradative enzymes such as alpha-amylase, levansucrase and alkaline phosphatase. Catalyzes the transfer of an acetyl group from acetyl coenzyme A (AcCoA) to an acceptor substrate and releases both CoA and the acetylated product. It possesses N1-acetyltransferase activity toward polyamine substrates including spermidine, spermine, aminopropylcadaverine, norspermidine, homospermidine, N(8)-acetylspermidine, diaminopropane and agmatine. The polypeptide is Spermidine/spermine N(1)-acetyltransferase (Bacillus subtilis (strain 168)).